A 930-amino-acid chain; its full sequence is Urea transporter 2 (930 aa).

A compositionally biased stretch (basic and acidic residues) spans 1–11; that stretch reads MSDHHPLKEMS. A disordered region spans residues 1–90; that stretch reads MSDHHPLKEM…KRRESEVSRR (90 aa). 2 stretches are compositionally biased toward low complexity: residues 12 to 25 and 32 to 43; these read DSNS…PLSS and SELSSPTWPSSS. Positions 56-89 are enriched in basic and acidic residues; the sequence is PEEKDLRSSDEDSHIVKIEKPNERNKRRESEVSR. 8 helical membrane-spanning segments follow: residues 145–165, 185–205, 213–233, 242–262, 280–300, 311–331, 350–372, and 401–421; these read ISGL…TIAG, AIAS…MAVF, WWLL…SSAL, LPVF…ATGH, NITW…VGVG, GGVI…HAAI, IYLG…MFYA, and VVGV…FLLL. The segment at 452 to 479 is disordered; that stretch reads SEEEKSPNGGSGEQSHGSGQWKAEESSE. Phosphoserine is present on S487. Helical transmembrane passes span 610 to 630, 648 to 668, 676 to 696, and 705 to 725; these read GILI…SGCL, AIAA…MAVF, WWLL…SSAL, and LPVF…ATGH. N-linked (GlcNAc...) asparagine glycosylation is present at N743. 4 consecutive transmembrane segments (helical) span residues 774-794, 813-833, 842-862, and 864-884; these read GGIF…HAAI, IYFG…GGMF, LLAI…ANML, and VFGL…FLLL.

It belongs to the urea transporter family. Highly expressed in kidney medulla (at protein level). Also detected in testes, heart, brain and liver (at protein level). In the kidney, present in thin descending limbs of the loop of Henle and in the middle and terminal inner medullary collecting ducts. In terms of tissue distribution, expressed in the kidney medulla. As to expression, expressed in the peritubular myoid cells forming the outermost layer of the seminiferous tubules within the testes and is not detected in kidney. Expression levels are coordinated with the stage of testes development and increase 15 days postpartum, commensurate with the start of seminiferous tubule fluid movement.

Its subcellular location is the apical cell membrane. The protein resides in the basolateral cell membrane. The catalysed reaction is urea(in) = urea(out). Its activity is regulated as follows. Inhibited by phloretin. Activated by forskolin, 3-isobutyl-1-methylxanthine (IBMX) and cAMP. Inhibited by phloretin. With respect to regulation, inhibited by phloretin. Activated by forskolin, 3-isobutyl-1-methylxanthine (IBMX) and cAMP. In terms of biological role, mediates the transport of urea driven by a concentration gradient across the cell membrane of the renal inner medullary collecting duct which is critical to the urinary concentrating mechanism. Functionally, mediates the transport of urea driven by a concentration gradient across the cell membrane. Implicated in the urea movement across the blood-testis barrier and does not translocate water. This is Urea transporter 2 (Slc14a2) from Mus musculus (Mouse).